Consider the following 341-residue polypeptide: tRNA N6-adenosine threonylcarbamoyltransferase (341 aa).

Histidine 111 and histidine 115 together coordinate Fe cation. Substrate contacts are provided by residues 134 to 138 (LVSGG), aspartate 167, glycine 180, and asparagine 276. Aspartate 304 contacts Fe cation.

Belongs to the KAE1 / TsaD family. The cofactor is Fe(2+).

The protein resides in the cytoplasm. The catalysed reaction is L-threonylcarbamoyladenylate + adenosine(37) in tRNA = N(6)-L-threonylcarbamoyladenosine(37) in tRNA + AMP + H(+). Required for the formation of a threonylcarbamoyl group on adenosine at position 37 (t(6)A37) in tRNAs that read codons beginning with adenine. Is involved in the transfer of the threonylcarbamoyl moiety of threonylcarbamoyl-AMP (TC-AMP) to the N6 group of A37, together with TsaE and TsaB. TsaD likely plays a direct catalytic role in this reaction. This chain is tRNA N6-adenosine threonylcarbamoyltransferase, found in Pseudomonas paraeruginosa (strain DSM 24068 / PA7) (Pseudomonas aeruginosa (strain PA7)).